The chain runs to 448 residues: Phosphoglucosamine mutase (448 aa).

Ser101 serves as the catalytic Phosphoserine intermediate. Residues Ser101, Asp241, Asp243, and Asp245 each coordinate Mg(2+). The residue at position 101 (Ser101) is a Phosphoserine.

This sequence belongs to the phosphohexose mutase family. Mg(2+) serves as cofactor. Activated by phosphorylation.

The catalysed reaction is alpha-D-glucosamine 1-phosphate = D-glucosamine 6-phosphate. Catalyzes the conversion of glucosamine-6-phosphate to glucosamine-1-phosphate. This Macrococcus caseolyticus (strain JCSC5402) (Macrococcoides caseolyticum) protein is Phosphoglucosamine mutase.